The primary structure comprises 80 residues: Conotoxin Pu11.1 (80 aa).

A signal peptide spans 1-19 (MKLVLAIVLILMLLSLSTG). Positions 20–42 (AEMSDNHASRSATALTDRLLGPK) are excised as a propeptide. Cystine bridges form between cysteine 46–cysteine 60, cysteine 53–cysteine 65, cysteine 59–cysteine 72, and cysteine 64–cysteine 79.

The protein belongs to the conotoxin I3 superfamily. Expressed by the venom duct.

It is found in the secreted. This is Conotoxin Pu11.1 from Conus pulicarius (Flea-bitten cone).